The chain runs to 137 residues: Small ribosomal subunit protein uS9c (137 aa).

This sequence belongs to the universal ribosomal protein uS9 family.

The protein resides in the plastid. The protein localises to the chloroplast. The polypeptide is Small ribosomal subunit protein uS9c (rps9) (Gracilaria tenuistipitata var. liui (Red alga)).